Here is a 383-residue protein sequence, read N- to C-terminus: Pleckstrin homology domain-containing family A member 1 (383 aa).

PH domains are found at residues 7 to 112 and 191 to 289; these read QNRI…KAIK and AVIK…GAIV. Position 284 is a phosphoserine (valine 284). The segment at 362–383 is disordered; the sequence is LPRSSQGTSRSRLSLQESQLPK. The segment covering 370 to 383 has biased composition (low complexity); it reads SRSRLSLQESQLPK.

As to quaternary structure, interacts with MPDZ and PTPN13.

The protein localises to the cytoplasm. It is found in the cell membrane. The protein resides in the nucleus. Binds specifically to phosphatidylinositol 3,4-diphosphate (PtdIns3,4P2), but not to other phosphoinositides. May recruit other proteins to the plasma membrane. The chain is Pleckstrin homology domain-containing family A member 1 (Plekha1) from Mus musculus (Mouse).